We begin with the raw amino-acid sequence, 365 residues long: Chorismate synthase (365 aa).

Over residues 41–51 the composition is skewed to basic and acidic residues; it reads IQKELDRRRPG. Positions 41 to 62 are disordered; sequence IQKELDRRRPGQSEVSTPRSEA. An NADP(+)-binding site is contributed by R48. Residues 125–127, G285, 300–304, and R327 each bind FMN; these read RSS and KPTPS.

Belongs to the chorismate synthase family. FMNH2 is required as a cofactor.

It carries out the reaction 5-O-(1-carboxyvinyl)-3-phosphoshikimate = chorismate + phosphate. It participates in metabolic intermediate biosynthesis; chorismate biosynthesis; chorismate from D-erythrose 4-phosphate and phosphoenolpyruvate: step 7/7. In terms of biological role, catalyzes the anti-1,4-elimination of the C-3 phosphate and the C-6 proR hydrogen from 5-enolpyruvylshikimate-3-phosphate (EPSP) to yield chorismate, which is the branch point compound that serves as the starting substrate for the three terminal pathways of aromatic amino acid biosynthesis. This reaction introduces a second double bond into the aromatic ring system. This Methanosarcina mazei (strain ATCC BAA-159 / DSM 3647 / Goe1 / Go1 / JCM 11833 / OCM 88) (Methanosarcina frisia) protein is Chorismate synthase.